A 63-amino-acid polypeptide reads, in one-letter code: Large ribosomal subunit protein uL29 (63 aa).

The protein belongs to the universal ribosomal protein uL29 family.

This Salmonella agona (strain SL483) protein is Large ribosomal subunit protein uL29.